Consider the following 145-residue polypeptide: NADH dehydrogenase [ubiquinone] 1 alpha subcomplex subunit 12 (145 aa).

Residue Met1 is modified to N-acetylmethionine.

The protein belongs to the complex I NDUFA12 subunit family. As to quaternary structure, complex I is composed of 45 different subunits.

Its subcellular location is the mitochondrion inner membrane. In terms of biological role, accessory subunit of the mitochondrial membrane respiratory chain NADH dehydrogenase (Complex I), that is believed not to be involved in catalysis. Complex I functions in the transfer of electrons from NADH to the respiratory chain. The immediate electron acceptor for the enzyme is believed to be ubiquinone. The protein is NADH dehydrogenase [ubiquinone] 1 alpha subcomplex subunit 12 (Ndufa12) of Mus musculus (Mouse).